A 67-amino-acid chain; its full sequence is Conotoxin Cl6.6b (67 aa).

The signal sequence occupies residues 1 to 24; it reads MKLTCVLIAAVLLLAVCQLDSADA. A propeptide spanning residues 25–37 is cleaved from the precursor; it reads TGYMRKNPSLRSP. 3 disulfide bridges follow: Cys-43–Cys-57, Cys-50–Cys-61, and Cys-56–Cys-65.

It belongs to the conotoxin O1 superfamily. Expressed by the venom duct.

The protein localises to the secreted. This is Conotoxin Cl6.6b from Californiconus californicus (California cone).